The sequence spans 267 residues: MAPAVDRKGYWGPTTSTLDWCEENYVVTLFVAEFWNTVSNLIMIIPPIFGAIQGIRDRLEKRYIAAYLALTVVGMGSWCFHMTLKYEMQLLDELPMIYSCCIFVYCMFECFKTKSSINYHLLFTLFLYSLTVTTIYLKVKEPIFHQVMYGMLVFTLVLRSIYIVTWVYPWLRGLGYTSLTVFLLGFLLWNIDNIFCDSLRNFRKRVPPVLGVTTQFHAWWHILTGLGSYLHILFSLYTRTLYLRYRPKVKFLFGIWPAVMFEPQRKH.

The Cytoplasmic portion of the chain corresponds to 1–33; that stretch reads MAPAVDRKGYWGPTTSTLDWCEENYVVTLFVAE. Residues Asp19, Trp20, Glu22, Asn24, and Glu33 each coordinate Ca(2+). A helical membrane pass occupies residues 34–55; sequence FWNTVSNLIMIIPPIFGAIQGI. Residues 56-61 are Lumenal-facing; it reads RDRLEK. The chain crosses the membrane as a helical span at residues 62–82; that stretch reads RYIAAYLALTVVGMGSWCFHM. Position 81 (His81) interacts with Zn(2+). The Cytoplasmic segment spans residues 83–87; sequence TLKYE. The helical transmembrane segment at 88-108 threads the bilayer; sequence MQLLDELPMIYSCCIFVYCMF. The Lumenal segment spans residues 109 to 118; that stretch reads ECFKTKSSIN. A helical transmembrane segment spans residues 119 to 139; the sequence is YHLLFTLFLYSLTVTTIYLKV. Topologically, residues 140 to 141 are cytoplasmic; sequence KE. The chain crosses the membrane as a helical span at residues 142-162; it reads PIFHQVMYGMLVFTLVLRSIY. Topologically, residues 163–173 are lumenal; the sequence is IVTWVYPWLRG. The chain crosses the membrane as a helical span at residues 174 to 194; the sequence is LGYTSLTVFLLGFLLWNIDNI. The Cytoplasmic segment spans residues 195 to 215; that stretch reads FCDSLRNFRKRVPPVLGVTTQ. Residues 216–236 traverse the membrane as a helical segment; the sequence is FHAWWHILTGLGSYLHILFSL. Zn(2+)-binding residues include His217 and His221. Topologically, residues 237 to 267 are lumenal; that stretch reads YTRTLYLRYRPKVKFLFGIWPAVMFEPQRKH.

This sequence belongs to the alkaline ceramidase family. Zn(2+) is required as a cofactor. In terms of tissue distribution, up-regulated with age in cerebeLlum and cerebrum.

It is found in the endoplasmic reticulum membrane. It localises to the golgi apparatus membrane. It catalyses the reaction an N-acyl-(4R)-4-hydroxysphinganine + H2O = (4R)-hydroxysphinganine + a fatty acid. The catalysed reaction is N-(5Z,8Z,11Z,14Z-eicosatetraenoyl)-sphing-4-enine + H2O = sphing-4-enine + (5Z,8Z,11Z,14Z)-eicosatetraenoate. It carries out the reaction N-(5Z,8Z,11Z,14Z-eicosatetraenoyl)-sphinganine + H2O = sphinganine + (5Z,8Z,11Z,14Z)-eicosatetraenoate. The enzyme catalyses N-(5Z,8Z,11Z,14Z-eicosatetraenoyl)-(4R)-hydroxysphinganine + H2O = (4R)-hydroxysphinganine + (5Z,8Z,11Z,14Z)-eicosatetraenoate. It catalyses the reaction N-(11Z-eicosenoyl)-sphing-4-enine + H2O = (11Z)-eicosenoate + sphing-4-enine. The catalysed reaction is N-(11Z-eicosenoyl)-sphinganine + H2O = (11Z)-eicosenoate + sphinganine. It carries out the reaction N-(11Z-eicosenoyl)-(4R)-hydroxysphinganine + H2O = (11Z)-eicosenoate + (4R)-hydroxysphinganine. The enzyme catalyses N-(9Z-octadecenoyl)-sphing-4-enine + H2O = sphing-4-enine + (9Z)-octadecenoate. It catalyses the reaction N-(9Z-octadecenoyl)-sphinganine + H2O = sphinganine + (9Z)-octadecenoate. The catalysed reaction is N-(9Z-octadecenoyl)-(4R)-hydroxysphinganine + H2O = (4R)-hydroxysphinganine + (9Z)-octadecenoate. It carries out the reaction an N-acylsphing-4-enine + H2O = sphing-4-enine + a fatty acid. The enzyme catalyses an N-acylsphinganine + H2O = sphinganine + a fatty acid. The protein operates within lipid metabolism; sphingolipid metabolism. Its activity is regulated as follows. Activated by Ca(2+) and inhibited by Zn(2+). Functionally, endoplasmic reticulum and Golgi ceramidase that catalyzes the hydrolysis of unsaturated long-chain C18:1-, C20:1- and C20:4-ceramides, dihydroceramides and phytoceramides into sphingoid bases like sphingosine and free fatty acids at alkaline pH. Ceramides, sphingosine, and its phosphorylated form sphingosine-1-phosphate are bioactive lipids that mediate cellular signaling pathways regulating several biological processes including cell proliferation, apoptosis and differentiation. Controls the generation of sphingosine in erythrocytes, and thereby sphingosine-1-phosphate in plasma. Through the regulation of ceramides and sphingosine-1-phosphate homeostasis in the brain may play a role in neurons survival and function. By regulating the levels of pro-inflammatory ceramides in immune cells and tissues, may modulate the inflammatory response. This chain is Alkaline ceramidase 3 (Acer3), found in Mus musculus (Mouse).